The sequence spans 334 residues: Small ribosomal subunit protein uS2 (334 aa).

The protein belongs to the universal ribosomal protein uS2 family.

The polypeptide is Small ribosomal subunit protein uS2 (Xanthobacter autotrophicus (strain ATCC BAA-1158 / Py2)).